Reading from the N-terminus, the 408-residue chain is Argininosuccinate synthase (408 aa).

ATP is bound by residues 10–18 (AYSGGLDTS) and Ala37. Residues Tyr90 and Ser95 each coordinate L-citrulline. ATP is bound at residue Gly120. Residues Thr122, Asn126, and Asp127 each contribute to the L-aspartate site. Asn126 serves as a coordination point for L-citrulline. Residues Arg130, Ser181, Ser190, Glu266, and Tyr278 each contribute to the L-citrulline site.

This sequence belongs to the argininosuccinate synthase family. Type 1 subfamily. In terms of assembly, homotetramer.

Its subcellular location is the cytoplasm. The catalysed reaction is L-citrulline + L-aspartate + ATP = 2-(N(omega)-L-arginino)succinate + AMP + diphosphate + H(+). It participates in amino-acid biosynthesis; L-arginine biosynthesis; L-arginine from L-ornithine and carbamoyl phosphate: step 2/3. This chain is Argininosuccinate synthase, found in Chromobacterium violaceum (strain ATCC 12472 / DSM 30191 / JCM 1249 / CCUG 213 / NBRC 12614 / NCIMB 9131 / NCTC 9757 / MK).